Here is a 223-residue protein sequence, read N- to C-terminus: Killer cell lectin-like receptor subfamily B member 1B allele A (223 aa).

The Cytoplasmic portion of the chain corresponds to M1–K43. An ITIM motif motif is present at residues L6–L11. The short motif at C32 to P35 is the LCK-binding motif element. Residues F44–V63 traverse the membrane as a helical; Signal-anchor for type II membrane protein segment. The Extracellular segment spans residues L64 to S223. In terms of domain architecture, C-type lectin spans E93–K212. Disulfide bonds link C122/C210 and C189/C202.

In terms of assembly, homodimer; disulfide-linked. Interacts with tyrosine kinase LCK. Binds PTPN6/SHP-1 in a phosphorylation-dependent manner. In terms of tissue distribution, expressed in NK cells and a subset of T-cells.

Its subcellular location is the membrane. Receptor for CLEC2D/OCIL. Ligand-binding contributes to inhibition of cytotoxic natural killer (NK) cells. May mediate MHC class I-independent 'missing-self' recognition of allografts, tumor cells and virus-infected cells. The protein is Killer cell lectin-like receptor subfamily B member 1B allele A (Klrb1b) of Mus musculus (Mouse).